The sequence spans 468 residues: GDNF family receptor alpha-1 (468 aa).

A signal peptide spans 1-24; the sequence is MFLATLYFALPLLDLLMSAEVSGG. 3 repeat units span residues 25–113, 150–238, and 239–342. Cysteine 36 and cysteine 42 are joined by a disulfide. Asparagine 59 carries N-linked (GlcNAc...) asparagine glycosylation. 10 disulfide bridges follow: cysteine 154/cysteine 214, cysteine 161/cysteine 167, cysteine 178/cysteine 192, cysteine 187/cysteine 233, cysteine 216/cysteine 221, cysteine 243/cysteine 313, cysteine 250/cysteine 256, cysteine 267/cysteine 285, cysteine 277/cysteine 337, and cysteine 315/cysteine 325. N-linked (GlcNAc...) asparagine glycosylation is found at asparagine 347 and asparagine 406. A lipid anchor (GPI-anchor amidated serine) is attached at serine 430. The propeptide at 431–468 is removed in mature form; it reads HITTKSMAAPPSCSLSSLPVLMLTALAALLSVSLAETS.

It belongs to the GDNFR family. As to quaternary structure, interacts with GDNF ligand and RET: forms a 2:2:2 ternary complex composed of GDNF ligand, GFRA1 and RET receptor. Interacts with SORL1, either alone or in complex with GDNF. Interaction between SORL1 and GFRA1 leads to GFRA1 internalization, but not degradation. As to expression, expressed in liver, brain, kidney and cochlea.

It is found in the cell membrane. The protein resides in the golgi apparatus. Its subcellular location is the trans-Golgi network. The protein localises to the endosome. It localises to the multivesicular body. Coreceptor for GDNF, a neurotrophic factor that enhances survival and morphological differentiation of dopaminergic neurons and increases their high-affinity dopamine uptake. GDNF-binding leads to autophosphorylation and activation of the RET receptor. The protein is GDNF family receptor alpha-1 (Gfra1) of Rattus norvegicus (Rat).